We begin with the raw amino-acid sequence, 581 residues long: Protein alan shepard (581 aa).

Pro residues predominate over residues 1-10; the sequence is MHPRYSPAPP. Residues 1-73 form a disordered region; sequence MHPRYSPAPP…AVTAAPPTPR (73 aa). A Phosphotyrosine modification is found at Y5. A compositionally biased stretch (polar residues) spans 35–54; the sequence is ANNSQQLPPQMPRSQNYANG. The span at 55–68 shows a compositional bias: low complexity; that stretch reads SSSSAAAASAVTAA. 2 positions are modified to phosphotyrosine: Y128 and Y146. Positions 168 to 226 are enriched in low complexity; it reads PATTTYGQRVPTAASPSNTNSSSSSNTGSQSGTLSTSLSHTTNTNTNMGPNGTAQNQNQ. The interval 168–234 is disordered; sequence PATTTYGQRV…NQQGGGGEQL (67 aa). RRM domains lie at 237–310 and 316–395; these read TNLY…MAKQ and TNLY…FADG. Residues 555–581 form a disordered region; sequence MTDSEQASTAASPDEAYTQYPHQAAPK.

Its function is as follows. Has a role in the perception of gravity. The protein is Protein alan shepard of Drosophila willistoni (Fruit fly).